The primary structure comprises 369 residues: Probable dual-specificity RNA methyltransferase RlmN (369 aa).

Catalysis depends on Glu108, which acts as the Proton acceptor. One can recognise a Radical SAM core domain in the interval Tyr114–Arg351. Residues Cys121 and Cys362 are joined by a disulfide bond. Residues Cys128, Cys132, and Cys135 each coordinate [4Fe-4S] cluster. Residues Gly183–Glu184, Ser217, Ser240–His242, and Asn319 each bind S-adenosyl-L-methionine. Cys362 (S-methylcysteine intermediate) is an active-site residue.

The protein belongs to the radical SAM superfamily. RlmN family. It depends on [4Fe-4S] cluster as a cofactor.

Its subcellular location is the cytoplasm. It carries out the reaction adenosine(2503) in 23S rRNA + 2 reduced [2Fe-2S]-[ferredoxin] + 2 S-adenosyl-L-methionine = 2-methyladenosine(2503) in 23S rRNA + 5'-deoxyadenosine + L-methionine + 2 oxidized [2Fe-2S]-[ferredoxin] + S-adenosyl-L-homocysteine. The enzyme catalyses adenosine(37) in tRNA + 2 reduced [2Fe-2S]-[ferredoxin] + 2 S-adenosyl-L-methionine = 2-methyladenosine(37) in tRNA + 5'-deoxyadenosine + L-methionine + 2 oxidized [2Fe-2S]-[ferredoxin] + S-adenosyl-L-homocysteine. Specifically methylates position 2 of adenine 2503 in 23S rRNA and position 2 of adenine 37 in tRNAs. This chain is Probable dual-specificity RNA methyltransferase RlmN, found in Rhodococcus erythropolis (strain PR4 / NBRC 100887).